The following is a 399-amino-acid chain: Acetylornithine aminotransferase (399 aa).

Residues 102 to 103 and F135 contribute to the pyridoxal 5'-phosphate site; that span reads GA. R138 contacts N(2)-acetyl-L-ornithine. 220–223 contributes to the pyridoxal 5'-phosphate binding site; the sequence is DEIQ. The residue at position 249 (K249) is an N6-(pyridoxal phosphate)lysine. S277 contributes to the N(2)-acetyl-L-ornithine binding site. A pyridoxal 5'-phosphate-binding site is contributed by T278.

It belongs to the class-III pyridoxal-phosphate-dependent aminotransferase family. ArgD subfamily. In terms of assembly, homodimer. Pyridoxal 5'-phosphate is required as a cofactor.

Its subcellular location is the cytoplasm. It carries out the reaction N(2)-acetyl-L-ornithine + 2-oxoglutarate = N-acetyl-L-glutamate 5-semialdehyde + L-glutamate. Its pathway is amino-acid biosynthesis; L-arginine biosynthesis; N(2)-acetyl-L-ornithine from L-glutamate: step 4/4. The chain is Acetylornithine aminotransferase from Oceanobacillus iheyensis (strain DSM 14371 / CIP 107618 / JCM 11309 / KCTC 3954 / HTE831).